A 1183-amino-acid polypeptide reads, in one-letter code: DNA-directed RNA polymerase subunit beta (1183 aa).

It belongs to the RNA polymerase beta chain family. In terms of assembly, the RNAP catalytic core consists of 2 alpha, 1 beta, 1 beta' and 1 omega subunit. When a sigma factor is associated with the core the holoenzyme is formed, which can initiate transcription.

The catalysed reaction is RNA(n) + a ribonucleoside 5'-triphosphate = RNA(n+1) + diphosphate. DNA-dependent RNA polymerase catalyzes the transcription of DNA into RNA using the four ribonucleoside triphosphates as substrates. This is DNA-directed RNA polymerase subunit beta from Staphylococcus aureus (strain Mu3 / ATCC 700698).